A 249-amino-acid chain; its full sequence is MSYDRAITVFSPDGHLFQVEYAQEAVKKGSTAVGVRGKDIVVLGVEKKSVAKLQDERTVRKICALDDNVCMAFAGLTADARIVINRARVECQSHRLTVEDPVTVEYITRYIASLKQRYTQSKRRRPFGISALIVGFDFDGTPRLYQTDPSGTYHAWKANAIGRGAKSVRVEFEKNYTDEAIETDDLTIKLVIKALLEVVQSGGKNIELAVMRRDQPLKILTSPEEIEKYVAEIEKEKEENEKKKQKKTS.

The protein belongs to the peptidase T1A family. In terms of assembly, the 26S proteasome consists of a 20S proteasome core and two 19S regulatory subunits. The 20S proteasome core is a barrel-shaped complex made of 28 subunits that are arranged in four stacked rings. The two outer rings are each formed by seven alpha subunits, and the two inner rings are formed by seven beta subunits. The proteolytic activity is exerted by three beta-subunits PSMB5, PSMB6 and PSMB7. PSMA7 interacts directly with the PSMG1-PSMG2 heterodimer which promotes 20S proteasome assembly. Interacts with HIF1A. Interacts with RAB7A. Interacts with PRKN. Interacts with ABL1 and ABL2. Interacts with EMAP2. Interacts with MAVS.

The protein localises to the cytoplasm. It localises to the nucleus. Its function is as follows. Component of the 20S core proteasome complex involved in the proteolytic degradation of most intracellular proteins. This complex plays numerous essential roles within the cell by associating with different regulatory particles. Associated with two 19S regulatory particles, forms the 26S proteasome and thus participates in the ATP-dependent degradation of ubiquitinated proteins. The 26S proteasome plays a key role in the maintenance of protein homeostasis by removing misfolded or damaged proteins that could impair cellular functions, and by removing proteins whose functions are no longer required. Associated with the PA200 or PA28, the 20S proteasome mediates ubiquitin-independent protein degradation. This type of proteolysis is required in several pathways including spermatogenesis (20S-PA200 complex) or generation of a subset of MHC class I-presented antigenic peptides (20S-PA28 complex). Inhibits the transactivation function of HIF-1A under both normoxic and hypoxia-mimicking conditions. The interaction with EMAP2 increases the proteasome-mediated HIF-1A degradation under the hypoxic conditions. Plays a role in hepatitis C virus internal ribosome entry site-mediated translation. Mediates nuclear translocation of the androgen receptor (AR) and thereby enhances androgen-mediated transactivation. Promotes MAVS degradation and thereby negatively regulates MAVS-mediated innate immune response. The chain is Proteasome subunit alpha type-7 (PSMA7) from Gallus gallus (Chicken).